The following is an 856-amino-acid chain: Nuclear valosin-containing protein-like (856 aa).

An interaction with RPL5 region spans residues Met-1–Lys-220. The Nucleolar localization signal signature appears at Arg-49 to Arg-52. Lys-70 carries the post-translational modification N6-acetyllysine. A disordered region spans residues Ala-84–Ile-175. Positions Lys-85–Arg-88 match the Nuclear localization signal motif. Residues Glu-92–Pro-111 show a composition bias toward acidic residues. Composition is skewed to polar residues over residues Gln-114–Leu-124 and Asp-133–Gly-158. Ser-134 is modified (phosphoserine). A Phosphothreonine modification is found at Thr-138. Position 156 is an N6-acetyllysine (Lys-156). Ser-191 is subject to Phosphoserine. The tract at residues Pro-197 to Gln-236 is disordered. Over residues Gln-205–Lys-218 the composition is skewed to basic and acidic residues. Residue Lys-208 forms a Glycyl lysine isopeptide (Lys-Gly) (interchain with G-Cter in SUMO2) linkage. Residues Ser-211 and Ser-215 each carry the phosphoserine modification. Positions Lys-218–Lys-232 match the Nuclear localization signal motif. Residues Arg-219–Arg-230 show a composition bias toward basic residues. An interaction with WDR74 region spans residues Val-267–Leu-474. An ATP-binding site is contributed by Gly-305–Thr-312. A disordered region spans residues Gln-496–Glu-523. Gly-622–Thr-629 contributes to the ATP binding site.

The protein belongs to the AAA ATPase family. Interacts with NCL/nucleolin. Isoform 1 and isoform 2 interact with TERT and isoform 1 exhibits a higher binding affinity for TERT compared to isoform 2. Isoform 1 interacts with MTREX in an ATP-dependent manner; the interaction is required to associate NVL with nuclear RNA exosome. Isoform 1 interacts with RPL5 in an ATP-dependent manner. Interacts with WDR74 (through WDR repeats); the interaction is independent of RNA or pre-60S ribosome particles. In terms of tissue distribution, widely expressed. Highest level of expression in heart, placenta, skeletal muscle, pancreas and retina.

The protein localises to the nucleus. The protein resides in the nucleoplasm. It localises to the nucleolus. Participates in the assembly of the telomerase holoenzyme and effecting of telomerase activity via its interaction with TERT. Involved in both early and late stages of the pre-rRNA processing pathways. Spatiotemporally regulates 60S ribosomal subunit biogenesis in the nucleolus. Catalyzes the release of specific assembly factors, such as WDR74, from pre-60S ribosomal particles through the ATPase activity. This is Nuclear valosin-containing protein-like from Homo sapiens (Human).